The sequence spans 38 residues: Kappa-actitoxin-Bcs3a (38 aa).

The ShKT domain occupies 2–37; sequence CIDRFPTGTCKHVKKGGSCKNSQKYRINCAKTCGLC. 3 cysteine pairs are disulfide-bonded: cysteine 2-cysteine 37, cysteine 11-cysteine 30, and cysteine 20-cysteine 34. The tract at residues 25–26 is crucial for binding to potassium channels; that stretch reads KY.

This sequence belongs to the sea anemone type 1 potassium channel toxin family. Type 1b subfamily.

Its subcellular location is the secreted. The protein resides in the nematocyst. Its function is as follows. Inhibits voltage-gated potassium channels (IC(50)=405.0 nM for rKCNA1/Kv1.1, IC(50)=0.03 nM for rKCNA2/Kv1.2, IC(50)=1.31 nM for rKCNA6/Kv1.6, IC(50)=74.11 nM for hKCNA3/Kv1.3, and IC(50)=247.69 nM for insect Shaker IR). Binds the Shaker IR channels in a voltage-independent manner. This chain is Kappa-actitoxin-Bcs3a, found in Bunodosoma caissarum (Sea anemone).